Consider the following 274-residue polypeptide: Large ribosomal subunit protein uL2cz/uL2cy (274 aa).

2 disordered regions span residues 1–23 and 224–274; these read MAIHLYKTSTPSTRNRAVDSQVK and NPVD…RRSK.

Belongs to the universal ribosomal protein uL2 family. Part of the 50S ribosomal subunit.

The protein resides in the plastid. Its subcellular location is the chloroplast. This is Large ribosomal subunit protein uL2cz/uL2cy (rpl2-A) from Vitis vinifera (Grape).